Here is a 394-residue protein sequence, read N- to C-terminus: Putative gustatory receptor 22a (394 aa).

Residues 1 to 16 (MSQPKRIHRICKGLAR) lie on the Cytoplasmic side of the membrane. The chain crosses the membrane as a helical span at residues 17-37 (FTIRATLYGSWVLGLFPFTFD). Topologically, residues 38-47 (SRKRRLNRSK) are extracellular. N-linked (GlcNAc...) asparagine glycosylation occurs at Asn-44. The chain crosses the membrane as a helical span at residues 48 to 68 (WLLAYGLVLNLTLLVLSMLPS). The Cytoplasmic portion of the chain corresponds to 69 to 148 (TDDHNSVKVE…HTFNRYVIEK (80 aa)). The chain crosses the membrane as a helical span at residues 149–169 (GLVIILEIGSSLVLYFGIPNS). Position 170 (Lys-170) is a topological domain, extracellular. Residues 171-191 (IVVYEAVCIYIVQLEVLMVVM) form a helical membrane-spanning segment. Residues 192–256 (HFHLAVIYIY…TAIYDIQVTL (65 aa)) are Cytoplasmic-facing. Residues 257-277 (FMATLFSVNIIVGHVLVICWI) traverse the membrane as a helical segment. The N-linked (GlcNAc...) asparagine glycan is linked to Asn-278. Residues 278 to 281 (NITR) are Extracellular-facing. The chain crosses the membrane as a helical span at residues 282-302 (FSLLVIFLLFPQALIINFWDL). Topologically, residues 303-361 (WQGIAFCDLAESTGKKTSMILKLFNDMENMDQETERRVTEFTLFCSHRRLKVCHLGLLD) are cytoplasmic. The chain crosses the membrane as a helical span at residues 362 to 382 (INYEMGFRMIITNILYVVFLV). Topologically, residues 383 to 394 (QFDYMNLKFKTD) are extracellular.

Belongs to the insect chemoreceptor superfamily. Gustatory receptor (GR) family. Gr22e subfamily. As to expression, expressed in neurons of the terminal external chemosensory organ of larvae.

The protein localises to the cell membrane. Its function is as follows. Probable gustatory receptor which mediates acceptance or avoidance behavior, depending on its substrates. The polypeptide is Putative gustatory receptor 22a (Gr22a) (Drosophila melanogaster (Fruit fly)).